The primary structure comprises 20 residues: Cytochrome c oxidase subunit 7B-heart, mitochondrial (20 aa).

This sequence belongs to the cytochrome c oxidase VIIb family. As to quaternary structure, component of the cytochrome c oxidase (complex IV, CIV), a multisubunit enzyme composed of 14 subunits. The complex is composed of a catalytic core of 3 subunits MT-CO1, MT-CO2 and MT-CO3, encoded in the mitochondrial DNA, and 11 supernumerary subunits COX4I, COX5A, COX5B, COX6A, COX6B, COX6C, COX7A, COX7B, COX7C, COX8 and NDUFA4, which are encoded in the nuclear genome. The complex exists as a monomer or a dimer and forms supercomplexes (SCs) in the inner mitochondrial membrane with NADH-ubiquinone oxidoreductase (complex I, CI) and ubiquinol-cytochrome c oxidoreductase (cytochrome b-c1 complex, complex III, CIII), resulting in different assemblies (supercomplex SCI(1)III(2)IV(1) and megacomplex MCI(2)III(2)IV(2)).

The protein localises to the mitochondrion inner membrane. The catalysed reaction is 4 Fe(II)-[cytochrome c] + O2 + 8 H(+)(in) = 4 Fe(III)-[cytochrome c] + 2 H2O + 4 H(+)(out). The protein operates within energy metabolism; oxidative phosphorylation. Its function is as follows. Component of the cytochrome c oxidase, the last enzyme in the mitochondrial electron transport chain which drives oxidative phosphorylation. The respiratory chain contains 3 multisubunit complexes succinate dehydrogenase (complex II, CII), ubiquinol-cytochrome c oxidoreductase (cytochrome b-c1 complex, complex III, CIII) and cytochrome c oxidase (complex IV, CIV), that cooperate to transfer electrons derived from NADH and succinate to molecular oxygen, creating an electrochemical gradient over the inner membrane that drives transmembrane transport and the ATP synthase. Cytochrome c oxidase is the component of the respiratory chain that catalyzes the reduction of oxygen to water. Electrons originating from reduced cytochrome c in the intermembrane space (IMS) are transferred via the dinuclear copper A center (CU(A)) of subunit 2 and heme A of subunit 1 to the active site in subunit 1, a binuclear center (BNC) formed by heme A3 and copper B (CU(B)). The BNC reduces molecular oxygen to 2 water molecules using 4 electrons from cytochrome c in the IMS and 4 protons from the mitochondrial matrix. This is Cytochrome c oxidase subunit 7B-heart, mitochondrial from Thunnus obesus (Bigeye tuna).